A 403-amino-acid chain; its full sequence is Forkhead box protein Q1 (403 aa).

Disordered stretches follow at residues 1-75 (MKLE…PGAE) and 94-116 (GAAGPGAGGAGSGEGARSKPYTR). Residues 32–48 (LSAAGDDSLGSDGDCAA) are compositionally biased toward low complexity. The segment covering 96-107 (AGPGAGGAGSGE) has biased composition (gly residues). A DNA-binding region (fork-head) is located at residues 119-214 (KPPYSYIALI…ADGVFRRRRK (96 aa)). Positions 216-266 (LSHRAPVPAPGLRPEEAPGLPAAPPPAPAAPASPRMRSPARQEERASPAGK) are disordered. The segment covering 236–246 (PAAPPPAPAAP) has biased composition (pro residues).

In terms of tissue distribution, expressed predominantly in the stomach, trachea, bladder and salivary gland.

Its subcellular location is the nucleus. Plays a role in hair follicle differentiation. In Homo sapiens (Human), this protein is Forkhead box protein Q1 (FOXQ1).